The primary structure comprises 452 residues: Phosphatidylinositol N-acetylglucosaminyltransferase GPI3 subunit (452 aa).

A helical transmembrane segment spans residues L407 to P427.

This sequence belongs to the glycosyltransferase group 1 family. As to quaternary structure, component of the phosphatidylinositol N-acetylglucosaminyltransferase complex composed of at least GPI1, GPI2, GPI3, GPI15, GPI19 and ERI1.

It is found in the endoplasmic reticulum membrane. It carries out the reaction a 1,2-diacyl-sn-glycero-3-phospho-(1D-myo-inositol) + UDP-N-acetyl-alpha-D-glucosamine = a 6-(N-acetyl-alpha-D-glucosaminyl)-1-(1,2-diacyl-sn-glycero-3-phospho)-1D-myo-inositol + UDP + H(+). The protein operates within glycolipid biosynthesis; glycosylphosphatidylinositol-anchor biosynthesis. Inhibited by Ras, probably via the interaction between RAS2 and ERI1. In terms of biological role, catalytic subunit in the complex catalyzing the transfer of N-acetylglucosamine from UDP-N-acetylglucosamine to phosphatidylinositol, the first step of GPI biosynthesis. The sequence is that of Phosphatidylinositol N-acetylglucosaminyltransferase GPI3 subunit (SPT14) from Saccharomyces cerevisiae (strain YJM789) (Baker's yeast).